Here is a 246-residue protein sequence, read N- to C-terminus: Probable transcriptional regulatory protein GWCH70_2524 (246 aa).

The protein belongs to the TACO1 family.

It is found in the cytoplasm. The protein is Probable transcriptional regulatory protein GWCH70_2524 of Geobacillus sp. (strain WCH70).